A 212-amino-acid chain; its full sequence is Uracil phosphoribosyltransferase (212 aa).

Residues Arg78, Arg103, and 130–138 (DPMLATGSS) each bind 5-phospho-alpha-D-ribose 1-diphosphate. Residues Ile193 and 198–200 (GDA) each bind uracil. Asp199 contributes to the 5-phospho-alpha-D-ribose 1-diphosphate binding site.

It belongs to the UPRTase family. The cofactor is Mg(2+).

It catalyses the reaction UMP + diphosphate = 5-phospho-alpha-D-ribose 1-diphosphate + uracil. It participates in pyrimidine metabolism; UMP biosynthesis via salvage pathway; UMP from uracil: step 1/1. With respect to regulation, allosterically activated by GTP. Functionally, catalyzes the conversion of uracil and 5-phospho-alpha-D-ribose 1-diphosphate (PRPP) to UMP and diphosphate. This Pseudomonas fluorescens (strain SBW25) protein is Uracil phosphoribosyltransferase.